Here is a 214-residue protein sequence, read N- to C-terminus: GTP-binding nuclear protein GSP1/Ran (214 aa).

Residues 4-168 (EVPTFKLVLV…LWLARKLAGN (165 aa)) enclose the Small GTPase Ran-type domain. 15 to 22 (DGGTGKTT) serves as a coordination point for GTP. The segment at 34-42 (KKYIATIGV) is switch-I. Residues Gly-65, 119 to 122 (NKVD), and 147 to 149 (SAK) contribute to the GTP site. The segment at 65–81 (GQEKFGGLRDGYYINAQ) is switch-II.

This sequence belongs to the small GTPase superfamily. Ran family. As to quaternary structure, found in a nuclear export complex with RanGTP, exportin and pre-miRNA.

The protein resides in the nucleus. GTP-binding protein involved in nucleocytoplasmic transport. Required for the import of protein into the nucleus and also for RNA export. Involved in chromatin condensation and control of cell cycle. In Eremothecium gossypii (strain ATCC 10895 / CBS 109.51 / FGSC 9923 / NRRL Y-1056) (Yeast), this protein is GTP-binding nuclear protein GSP1/Ran (GSP1).